Here is a 192-residue protein sequence, read N- to C-terminus: Riboflavin kinase (192 aa).

Residues Thr-47 and Asn-49 each contribute to the Mg(2+) site. Glu-129 (nucleophile) is an active-site residue.

The protein belongs to the flavokinase family. It depends on Zn(2+) as a cofactor. Mg(2+) serves as cofactor.

The catalysed reaction is riboflavin + ATP = FMN + ADP + H(+). It participates in cofactor biosynthesis; FMN biosynthesis; FMN from riboflavin (ATP route): step 1/1. Catalyzes the phosphorylation of riboflavin (vitamin B2) to form flavin mononucleotide (FMN) coenzyme. In Yarrowia lipolytica (strain CLIB 122 / E 150) (Yeast), this protein is Riboflavin kinase (FMN1).